Reading from the N-terminus, the 38-residue chain is Beta-galactosidase (38 aa).

The protein belongs to the glycosyl hydrolase 35 family. Heterodimer of a large and a small subunit. The small subunit is N-glycosylated.

The enzyme catalyses Hydrolysis of terminal non-reducing beta-D-galactose residues in beta-D-galactosides.. In terms of biological role, involved in cell wall degradation. Degrades polysaccharides containing beta-(1--&gt;4)-linked galactans, acting as an exo-(1--&gt;4)-beta-D-galactanase. This Hordeum vulgare (Barley) protein is Beta-galactosidase.